A 214-amino-acid polypeptide reads, in one-letter code: ATP phosphoribosyltransferase (214 aa).

The protein belongs to the ATP phosphoribosyltransferase family. Short subfamily. Heteromultimer composed of HisG and HisZ subunits.

The protein localises to the cytoplasm. The catalysed reaction is 1-(5-phospho-beta-D-ribosyl)-ATP + diphosphate = 5-phospho-alpha-D-ribose 1-diphosphate + ATP. It participates in amino-acid biosynthesis; L-histidine biosynthesis; L-histidine from 5-phospho-alpha-D-ribose 1-diphosphate: step 1/9. Its function is as follows. Catalyzes the condensation of ATP and 5-phosphoribose 1-diphosphate to form N'-(5'-phosphoribosyl)-ATP (PR-ATP). Has a crucial role in the pathway because the rate of histidine biosynthesis seems to be controlled primarily by regulation of HisG enzymatic activity. The protein is ATP phosphoribosyltransferase of Methylobacillus flagellatus (strain ATCC 51484 / DSM 6875 / VKM B-1610 / KT).